The primary structure comprises 595 residues: Aspartate--tRNA(Asp/Asn) ligase (595 aa).

Glu-178 is a binding site for L-aspartate. The aspartate stretch occupies residues 202-205; that stretch reads QIFK. Arg-224 provides a ligand contact to L-aspartate. Residues 224 to 226 and Gln-233 each bind ATP; that span reads RDE. His-458 is a binding site for L-aspartate. ATP is bound at residue Glu-488. Arg-495 contributes to the L-aspartate binding site. Position 540–543 (540–543) interacts with ATP; sequence GIDR.

Belongs to the class-II aminoacyl-tRNA synthetase family. Type 1 subfamily. Homodimer.

Its subcellular location is the cytoplasm. It carries out the reaction tRNA(Asx) + L-aspartate + ATP = L-aspartyl-tRNA(Asx) + AMP + diphosphate. In terms of biological role, aspartyl-tRNA synthetase with relaxed tRNA specificity since it is able to aspartylate not only its cognate tRNA(Asp) but also tRNA(Asn). Reaction proceeds in two steps: L-aspartate is first activated by ATP to form Asp-AMP and then transferred to the acceptor end of tRNA(Asp/Asn). The sequence is that of Aspartate--tRNA(Asp/Asn) ligase from Acaryochloris marina (strain MBIC 11017).